The chain runs to 202 residues: Putative transposon Tn552 DNA-invertase bin3 (202 aa).

Residues 1 to 143 (MIIGYARVSS…QGIQVAKEKG (143 aa)) enclose the Resolvase/invertase-type recombinase catalytic domain. Ser9 serves as the catalytic O-(5'-phospho-DNA)-serine intermediate.

It belongs to the site-specific recombinase resolvase family.

Functionally, potential DNA invertase. This chain is Putative transposon Tn552 DNA-invertase bin3 (bin3), found in Staphylococcus aureus.